A 378-amino-acid polypeptide reads, in one-letter code: Cobalt-precorrin-5B C(1)-methyltransferase (378 aa).

It belongs to the CbiD family.

It carries out the reaction Co-precorrin-5B + S-adenosyl-L-methionine = Co-precorrin-6A + S-adenosyl-L-homocysteine. It participates in cofactor biosynthesis; adenosylcobalamin biosynthesis; cob(II)yrinate a,c-diamide from sirohydrochlorin (anaerobic route): step 6/10. In terms of biological role, catalyzes the methylation of C-1 in cobalt-precorrin-5B to form cobalt-precorrin-6A. The chain is Cobalt-precorrin-5B C(1)-methyltransferase from Thermoplasma volcanium (strain ATCC 51530 / DSM 4299 / JCM 9571 / NBRC 15438 / GSS1).